Consider the following 105-residue polypeptide: Met repressor (105 aa).

This sequence belongs to the MetJ family. Homodimer.

It is found in the cytoplasm. In terms of biological role, this regulatory protein, when combined with SAM (S-adenosylmethionine) represses the expression of the methionine regulon and of enzymes involved in SAM synthesis. The protein is Met repressor of Klebsiella pneumoniae subsp. pneumoniae (strain ATCC 700721 / MGH 78578).